We begin with the raw amino-acid sequence, 287 residues long: Glutamate racemase (287 aa).

Substrate is bound by residues Asp32 to Ser33 and Tyr64 to Gly65. The active-site Proton donor/acceptor is Cys96. Asn97–Thr98 is a binding site for substrate. The Proton donor/acceptor role is filled by Cys208. Thr209–His210 provides a ligand contact to substrate.

The protein belongs to the aspartate/glutamate racemases family.

The catalysed reaction is L-glutamate = D-glutamate. The protein operates within cell wall biogenesis; peptidoglycan biosynthesis. In terms of biological role, provides the (R)-glutamate required for cell wall biosynthesis. This chain is Glutamate racemase, found in Serratia proteamaculans (strain 568).